Reading from the N-terminus, the 311-residue chain is MAEMDPVAEFPQPPGAARWAEVMARFAARLGAQGRRVVLVTSGGTKVPLEARPVRFLDNFSSGRRGATSAEAFLAAGYGVLFLYRARSAFPYAHRFPPQTWLSALRPSGPALSGLLSLEAEENALPGFAEALRSYQEAAAAGTFLAVEFTTLADYLHLLQAAAQALNPLGPSAMFYLAAAVSDFYVPVSEMPEHKIQSSGGPLQITMKMVPKLLSPLVKDWAPKAFIISFKLETDPAIVINRARKALEIYQHQVVVANILESRQSFVFIVTKDSETKLLLSEEEIEKGVEIEEKIVDNLQSRHTAFIGDRN.

A2 carries the N-acetylalanine modification.

The protein belongs to the PPC synthetase family. Homodimer.

It catalyses the reaction (R)-4'-phosphopantothenate + L-cysteine + ATP = N-[(R)-4-phosphopantothenoyl]-L-cysteine + AMP + diphosphate + H(+). It carries out the reaction (R)-4'-phosphopantothenate + L-cysteine + CTP = N-[(R)-4-phosphopantothenoyl]-L-cysteine + CMP + diphosphate + H(+). The protein operates within cofactor biosynthesis; coenzyme A biosynthesis; CoA from (R)-pantothenate: step 2/5. Functionally, catalyzes the second step in the biosynthesis of coenzyme A from vitamin B5, where cysteine is conjugated to 4'-phosphopantothenate to form 4-phosphopantothenoylcysteine. Has a preference for ATP over CTP as a cosubstrate. The polypeptide is Phosphopantothenate--cysteine ligase (PPCS) (Homo sapiens (Human)).